Here is a 196-residue protein sequence, read N- to C-terminus: Oocyte zinc finger protein XlCOF26 (196 aa).

C2H2-type zinc fingers lie at residues 6–28 (YSCT…QKNH), 34–56 (FTCT…QRIH), 62–84 (FTCT…QRIH), 90–112 (FTCT…HKIH), 118–140 (FTCP…QRTH), 146–168 (FTCT…QSTH), and 174–196 (FTCT…QMTH).

It belongs to the krueppel C2H2-type zinc-finger protein family.

The protein resides in the nucleus. Functionally, may be involved in transcriptional regulation. The sequence is that of Oocyte zinc finger protein XlCOF26 from Xenopus laevis (African clawed frog).